The chain runs to 966 residues: Polycystin-2 (966 aa).

The interval 1–106 (MVNSRRVQPQ…DDDEVEGEEG (106 aa)) is disordered. Topologically, residues 1 to 217 (MVNSRRVQPQ…NANREKYLKS (217 aa)) are cytoplasmic. The segment covering 30–44 (VAGGAGLAVPGGLGE) has biased composition (gly residues). Basic and acidic residues predominate over residues 46–56 (RGLEIEMERIR). Residues 58–79 (AAARDPPAGASASPSPPLSSCS) are compositionally biased toward low complexity. Phosphoserine is present on residues S72 and S76. Residues 91–105 (EAEEDDDDDEVEGEE) are compositionally biased toward acidic residues. R135 is modified (omega-N-methylarginine). The interval 147–179 (HLSGRRRRLEDQGAQCPSPAGGGDPLHRHLPLE) is disordered. The helical transmembrane segment at 218-239 (VLRELVTYLFFLVVLCILTYGM) threads the bilayer. The Extracellular portion of the chain corresponds to 240–466 (MSSNVYYYTR…PVKLIRYVTA (227 aa)). 3 N-linked (GlcNAc...) asparagine glycosylation sites follow: N297, N303, and N326. A disulfide bridge connects residues C329 and C342. Residues N360 and N373 are each glycosylated (N-linked (GlcNAc...) asparagine). A helical membrane pass occupies residues 467–487 (FDFFLAACEIIFCFFIIYYVV). The Cytoplasmic portion of the chain corresponds to 488–503 (EEILEIRIHRLSYFRS). Residues 504 to 524 (FWNCLDVVIVVLSVVAMVINI) traverse the membrane as a helical segment. Topologically, residues 525 to 550 (YRMSNAEGLLQFLEDQNSFPNFEHVA) are extracellular. Residues 551–571 (YWQIQFNNISAVMVFLVWIKL) form a helical membrane-spanning segment. Residue Q555 coordinates cholesterol. At 572-595 (FKFINFNRTMSQLSTTMSRCAKDL) the chain is on the cytoplasmic side. The helical transmembrane segment at 596–617 (FGFTIMFSIIFLAYAQLAYLVF) threads the bilayer. Topologically, residues 618–629 (GTQVDDFSTFQE) are extracellular. Positions 630-644 (CIFTQFRIILGDINF) form an intramembrane region, pore-forming. A Ca(2+)-binding site is contributed by L639. The Selectivity filter motif lies at 639–641 (LGD). The Extracellular segment spans residues 645–652 (AEIEEANR). The helical transmembrane segment at 653–673 (VLGPLYFTTFVFFMFFILLNM) threads the bilayer. Residues 674–966 (FLAIINDSYS…GGNGSANVHA (293 aa)) lie on the Cytoplasmic side of the membrane. The 36-residue stretch at 748-783 (HTDAEIEAIFTKYDQDGDQELTEREHQQMRDDLEKE) folds into the EF-hand domain. Ca(2+) is bound by residues D761, D763, D765, E767, and E772. Residues 764-828 (GDQELTEREH…GHSSRRRGSI (65 aa)) are disordered. Positions 768 to 793 (LTEREHQQMRDDLEKEREDLDLEHSS) are enriched in basic and acidic residues. Residues 794-805 (LPRPMSSRSFPR) are compositionally biased toward low complexity. 4 positions are modified to phosphoserine: S799, S806, S810, and S827. Positions 801-820 (RSFPRSLDDSEEEDDEDSGH) are linker. The interval 808–819 (DDSEEEDDEDSG) is important for interaction with PACS1 and PACS2. A coiled-coil region spans residues 831–870 (GVSYEEFQVLVRRVDRMEHSIGSIVSKIDAVIVKLEIMER). The segment at 914–966 (WESDDAASQTGHGVSTQVGLGGQPHPRNPRPPSSQSAEGLEGGGGNGSANVHA) is disordered. The segment covering 919–931 (AASQTGHGVSTQV) has biased composition (polar residues).

The protein belongs to the polycystin family. Homotetramer. Component of the heterotetrameric polycystin channel complex with PKD1; the tetramer contains one PKD1 chain and three PKD2 chains. Interaction with PKD1 is required for ciliary localization. Isoform 1 interacts with PKD1 while isoform 3 does not. Interacts with PKD1L1. Interacts with CD2AP. Interacts with HAX1. Interacts with NEK8. Part of a complex containing AKAP5, ADCY5, ADCY6 and PDE4C. Interacts (via C-terminus) with TRPV4 (via C-terminus). Interacts (via C-terminal acidic region) with PACS1 and PACS2; these interactions retain the protein in the endoplasmic reticulum and prevent trafficking to the cell membrane. Interacts with TMEM33; enhancing its opening at the ER membrane. Interacts with TMEM120A; TMEM120A inhibits PKD2 channel activity through the physical association of PKD2 with TMEM120A. Interacts (via N-terminus) with RYR2; regulates RYR2 channel activity. In terms of processing, N-glycosylated. The four subunits in a tetramer probably differ in the extent of glycosylation; simultaneous glycosylation of all experimentally validated sites would probably create steric hindrance. Post-translationally, sumoylated by SUMO1; sumoylation regulates PKD2 membrane recycling and is necessary for intravascular pressure-induced arterial contractility. Phosphorylated. Phosphorylation is important for protein function; a mutant that lacks the N-terminal phosphorylation sites cannot complement a zebrafish pkd2-deficient mutant. PKD-mediated phosphorylation at the C-terminus regulates its function in the release of Ca(2+) stores from the endoplasmic reticulum. Phosphorylation at Ser-810 regulates PKD2 trafficking. Phosphorylation at Ser-72 is required for PKD2 trafficking to or retention at the lateral plasma membrane. Phosphorylation at Ser-799, Ser-810 and Ser-827 regulates PKD2 channel activity. In terms of tissue distribution, detected in kidney epithelium (at protein level). Highly expressed on basolateral membranes in distal convoluted tubules and medullary thick ascending limbs of Henle. Detected at much lower levels in cortical and medullary collecting tubules, and not detected in the glomerular tuft, in thin limbs of Henle, interstitium and blood vessels (at protein level). Expressed in mesenchymally derived structures in the developing embryo at day 12.5. Isoform 1 is predominantly expressed in kidney at all developmental stages with high levels also detected in lung. Isoform 3 shows highest expression in brain with lower expression in kidney and lung, low levels in thymus and is hardly detectable in liver.

The protein localises to the cell projection. It localises to the cilium membrane. Its subcellular location is the cell membrane. It is found in the basolateral cell membrane. The protein resides in the cytoplasmic vesicle membrane. The protein localises to the endoplasmic reticulum membrane. It localises to the golgi apparatus. Its subcellular location is the vesicle. It is found in the secreted. The protein resides in the extracellular exosome. The catalysed reaction is K(+)(in) = K(+)(out). The enzyme catalyses Na(+)(in) = Na(+)(out). It carries out the reaction Ca(2+)(in) = Ca(2+)(out). Its activity is regulated as follows. Channel activity is regulated by phosphorylation. The channel is activated by increased cytoplasmic Ca(2+) (in the uM range) and by membrane depolarization. TMEM120A inhibits the channel activity of PKD2, and mediates mechanosensitivity of the PKD2-TMEM120A channel complex. At the endoplasmic reticulum membrane (ER), TMEM33 enhances its channel activity. PKD1/ PKD2 complex on the plasma membrane is activated by PKD1 N-terminus. Its function is as follows. Forms a nonselective cation channel. Can function as a homotetrameric ion channel or can form heteromer with PKD1. Displays distinct function depending on its subcellular localization and regulation by its binding partners. Functions as a cation channel, with a preference for monovalent cations over divalent cations that allows K(+), Na(+) and Ca(2+) influx, with low selectivity for Ca(2+). Involved in fluid-flow mechanosensation by the primary cilium in renal epithelium. In the endoplasmic reticulum, likely functions as a K(+) channel to facilitate Ca(2+) release. The heterotetrameric PKD1/PKD2 channel has higher Ca(2+) permeability than homomeric PKD2 channel and acts as a primarily Ca(2+)-permeable channel. PKD1 and PKD2 may function through a common signaling pathway that is necessary to maintain the normal, differentiated state of renal tubule cells. Interacts with and acts as a regulator of a number of other channels, such as TRPV4, TRPC1, IP3R, RYR2, ultimately further affecting intracellular signaling, to modulate intracellular Ca(2+) signaling. Together with TRPV4, forms mechano- and thermosensitive channels in cilium. In cardiomyocytes, PKD2 modulates Ca(2+) release from stimulated RYR2 receptors through direct association. Also involved in left-right axis specification via its role in sensing nodal flow; forms a complex with PKD1L1 in cilia to facilitate flow detection in left-right patterning. Acts as a regulator of cilium length together with PKD1. Mediates systemic blood pressure and contributes to the myogenic response in cerebral arteries though vasoconstriction. This is Polycystin-2 from Mus musculus (Mouse).